A 665-amino-acid polypeptide reads, in one-letter code: Fructose-1,6-bisphosphatase class 3 (665 aa).

Belongs to the FBPase class 3 family. It depends on Mn(2+) as a cofactor.

It catalyses the reaction beta-D-fructose 1,6-bisphosphate + H2O = beta-D-fructose 6-phosphate + phosphate. The protein operates within carbohydrate biosynthesis; gluconeogenesis. This Clostridium acetobutylicum (strain ATCC 824 / DSM 792 / JCM 1419 / IAM 19013 / LMG 5710 / NBRC 13948 / NRRL B-527 / VKM B-1787 / 2291 / W) protein is Fructose-1,6-bisphosphatase class 3.